The following is a 432-amino-acid chain: Glutamyl-tRNA reductase (432 aa).

Substrate contacts are provided by residues 55–58 (TCNR), Ser-114, 119–121 (ETQ), and Gln-125. The active-site Nucleophile is Cys-56. 194 to 199 (GAGEMI) lines the NADP(+) pocket.

This sequence belongs to the glutamyl-tRNA reductase family. In terms of assembly, homodimer.

It carries out the reaction (S)-4-amino-5-oxopentanoate + tRNA(Glu) + NADP(+) = L-glutamyl-tRNA(Glu) + NADPH + H(+). It participates in porphyrin-containing compound metabolism; protoporphyrin-IX biosynthesis; 5-aminolevulinate from L-glutamyl-tRNA(Glu): step 1/2. In terms of biological role, catalyzes the NADPH-dependent reduction of glutamyl-tRNA(Glu) to glutamate 1-semialdehyde (GSA). This Burkholderia ambifaria (strain MC40-6) protein is Glutamyl-tRNA reductase.